Here is a 378-residue protein sequence, read N- to C-terminus: MKILVDENMPYARELFSRLGEVKAVPGRPIPVEELNHADALMVRSVTKVNESLLSGTPINFVGTATAGTDHVDEAWLKQAGIGFSAAPGCNAIAVVEYVFSALLMLAERDGFSLRDRTIGIVGVGNVGSRLQTRLEALGIRTLLCDPPRAARGDEGDFRTLDELVQEADVLTFHTPLYKDGPYKTLHLADETLIRRLKPGAILINACRGPVVDNAALLARLNAGQPLSVVLDVWEGEPDLNVALLEAVDIGTSHIAGYTLEGKARGTTQVFEAYSAFIGREQRVALETLLPAPEFGRITLHGPLDQPTLKRLAHLVYDVRRDDAPLRKVAGIPGEFDKLRKNYLERREWSSLYVMCDDETAAALLCKLGFNAVHHPAH.

Residues S45 and T66 each coordinate substrate. D146 and T175 together coordinate NAD(+). R208 is a catalytic residue. Residue D232 coordinates NAD(+). E237 is an active-site residue. The Proton donor role is filled by H254. Position 257 (G257) interacts with NAD(+). Residue Y258 participates in substrate binding.

This sequence belongs to the D-isomer specific 2-hydroxyacid dehydrogenase family. PdxB subfamily. As to quaternary structure, homodimer.

It is found in the cytoplasm. The catalysed reaction is 4-phospho-D-erythronate + NAD(+) = (R)-3-hydroxy-2-oxo-4-phosphooxybutanoate + NADH + H(+). The protein operates within cofactor biosynthesis; pyridoxine 5'-phosphate biosynthesis; pyridoxine 5'-phosphate from D-erythrose 4-phosphate: step 2/5. Functionally, catalyzes the oxidation of erythronate-4-phosphate to 3-hydroxy-2-oxo-4-phosphonooxybutanoate. In Salmonella agona (strain SL483), this protein is Erythronate-4-phosphate dehydrogenase.